Here is an 81-residue protein sequence, read N- to C-terminus: uncharacterized protein (81 aa).

This is an uncharacterized protein from Vaccinia virus (strain Copenhagen) (VACV).